Consider the following 436-residue polypeptide: Adenosylmethionine-8-amino-7-oxononanoate aminotransferase (436 aa).

W56 is a binding site for substrate. 114-115 (GS) is a pyridoxal 5'-phosphate binding site. A substrate-binding site is contributed by Y148. D245 serves as a coordination point for pyridoxal 5'-phosphate. K274, S309, and R400 together coordinate substrate. K274 is subject to N6-(pyridoxal phosphate)lysine.

The protein belongs to the class-III pyridoxal-phosphate-dependent aminotransferase family. BioA subfamily. Homodimer. Pyridoxal 5'-phosphate is required as a cofactor.

Its subcellular location is the cytoplasm. It catalyses the reaction (8S)-8-amino-7-oxononanoate + S-adenosyl-L-methionine = S-adenosyl-4-methylsulfanyl-2-oxobutanoate + (7R,8S)-7,8-diammoniononanoate. It participates in cofactor biosynthesis; biotin biosynthesis; 7,8-diaminononanoate from 8-amino-7-oxononanoate (SAM route): step 1/1. Functionally, catalyzes the transfer of the alpha-amino group from S-adenosyl-L-methionine (SAM) to 7-keto-8-aminopelargonic acid (KAPA) to form 7,8-diaminopelargonic acid (DAPA). It is the only aminotransferase known to utilize SAM as an amino donor. The polypeptide is Adenosylmethionine-8-amino-7-oxononanoate aminotransferase (Helicobacter pylori (strain ATCC 700392 / 26695) (Campylobacter pylori)).